Consider the following 72-residue polypeptide: RTCNKTFSDQSKICPPGENICYTKTWCDAFCSQRGKRVELGCAATCPKVKAGVEIKCCSTDNCNKFQFGKPR.

5 disulfide bridges follow: Cys3/Cys21, Cys14/Cys42, Cys27/Cys31, Cys46/Cys57, and Cys58/Cys63. The residue at position 72 (Arg72) is an Arginine amide.

Belongs to the three-finger toxin family. Long-chain subfamily. Type II alpha-neurotoxin sub-subfamily. As to quaternary structure, monomer (predominant). In terms of processing, amidation does not significantly affect toxin selectivity, since the activity profile and binding data are reminiscent of classical long-chain 3-finger toxins with a free carboxyl termini. Expressed by the venom gland.

The protein localises to the secreted. Binds with high affinity to muscular (IC(50)=114 nM) and neuronal (alpha-7/CHRNA7) (IC(50)=58 nM) nicotinic acetylcholine receptor (nAChR) and inhibits acetylcholine from binding to the receptor, thereby impairing neuromuscular and neuronal transmission. Competitive radioligand binding assays also demonstrate that this toxin competes with epibatidine binding to the Lymnaea stagnalis acetylcholine-binding protein (Ls-AChBP) (IC(50)=4.9 nM). The sequence is that of Alpha-elapitoxin-Dpp2d from Dendroaspis polylepis polylepis (Black mamba).